Consider the following 989-residue polypeptide: Presequence protease, mitochondrial (989 aa).

The N-terminal 16 residues, 1 to 16 (MLRFQRFASSYAQAQA), are a transit peptide targeting the mitochondrion. H84 is a binding site for Zn(2+). E87 acts as the Proton acceptor in catalysis. Position 88 (H88) interacts with Zn(2+). The active site involves E160. Position 185 (E185) interacts with Zn(2+). At S920 the chain carries Phosphoserine. Residue 972–979 (GPGIEGKT) participates in ATP binding.

Belongs to the peptidase M16 family. PreP subfamily. In terms of assembly, monomer and homodimer; homodimerization is induced by binding of the substrate. Zn(2+) is required as a cofactor.

Its subcellular location is the mitochondrion intermembrane space. It localises to the mitochondrion matrix. Its activity is regulated as follows. Activated by nucleotides, including ATP, GTP, CTP, UTP, and ADP. Activated by copper, manganese, calcium and magnesium ions; copper and manganese restore activity following inactivation by EDTA (ethylenediaminetetraacetic acid). Inhibited by metal chelators including EDTA, EGTA (ethylene glycol bis(2-aminoethyl)tetraacetic acid), and 1,10-phenanthroline. Inhibited by copper, zinc, and iron ions. Also inhibited by dithiothreitol p-mercuribenzenesulfonic acid, N-ethylmaleimide, protoporphyrin, hemin, protamine and triarginine. In terms of biological role, degrades mitochondrial transit peptides after their cleavage in the intermembrane space or in the matrix, and presequence peptides; clearance of these peptides is required to keep the presequence processing machinery running. Preferentially cleaves the N-terminal side of paired basic amino acid residues. Also degrades other unstructured peptides. May function as an ATP-dependent peptidase as opposed to a metalloendopeptidase. This chain is Presequence protease, mitochondrial, found in Saccharomyces cerevisiae (strain ATCC 204508 / S288c) (Baker's yeast).